A 291-amino-acid chain; its full sequence is ATP synthase gamma chain (291 aa).

Belongs to the ATPase gamma chain family. F-type ATPases have 2 components, CF(1) - the catalytic core - and CF(0) - the membrane proton channel. CF(1) has five subunits: alpha(3), beta(3), gamma(1), delta(1), epsilon(1). CF(0) has three main subunits: a, b and c.

It localises to the cell inner membrane. In terms of biological role, produces ATP from ADP in the presence of a proton gradient across the membrane. The gamma chain is believed to be important in regulating ATPase activity and the flow of protons through the CF(0) complex. The polypeptide is ATP synthase gamma chain (Variovorax paradoxus (strain S110)).